Consider the following 581-residue polypeptide: MTGLGVRSSSYGSLEKTGLNGVVLPIQITTTTRTKPSKMQKDREGIVHWICKFAGRKKVGMLLLFLISAVVFLRVLYVGKGEDSQEGQGPPSLHFNGSSGVNYSNMLQTNEELNMNIGNISFKAKEVIVFPPPPIHFLGYSLPQGHPCNSFTLPPPPADRKRTGPRPCPVCYLPVEEAVALMPNAPSFSPVLKNLTYIYEEPLNRETEFGGSDFGGYPTLKHRNDSFDIKETMSVHCGFVKGPQPGRNTGFDIDEADLLEMKQCRGIVVASAVFDAFDDVKAPQNISKYAEETVCFYMFVDEETESILKRERGLDGNKKVGIWRVVVVHNLPYSDGRRNGKVPKLLVHRMFPNARYSLWIDGKLELVVDPYQILERFLWRKNATFAISRHYKRFDVLVEAEANKAAGKYDNASIDFQVDFYKNEGLTPYSVAKLPITSDVPEGCVILREHVPISNLFTCLWFNEVDRFTSRDQISFSTVRDKIAAKTNWTVSMFLDCERRNFVVQRYHRAEQERFARQRPPVPNFPPPPPSPPPPVLISSDLPRKMSSGRATPPRRRGRDRRSGQRGHRKANLPVRLPDSA.

The Cytoplasmic segment spans residues 1–58 (MTGLGVRSSSYGSLEKTGLNGVVLPIQITTTTRTKPSKMQKDREGIVHWICKFAGRKK). A helical; Signal-anchor for type II membrane protein membrane pass occupies residues 59–79 (VGMLLLFLISAVVFLRVLYVG). The Lumenal segment spans residues 80 to 581 (KGEDSQEGQG…NLPVRLPDSA (502 aa)). Residues N96, N102, N119, N194, N224, N285, N382, N411, and N488 are each glycosylated (N-linked (GlcNAc...) asparagine). The tract at residues 514–581 (RFARQRPPVP…NLPVRLPDSA (68 aa)) is disordered. A compositionally biased stretch (pro residues) spans 520–536 (PPVPNFPPPPPSPPPPV). Basic residues predominate over residues 553-571 (PPRRRGRDRRSGQRGHRKA).

The protein belongs to the glycosyltransferase 8 family. Expressed in siliques and seeds.

Its subcellular location is the golgi apparatus membrane. It functions in the pathway glycan metabolism; pectin biosynthesis. Probable glycosyltransferase involved in pectin and/or xylans biosynthesis in cell walls. Together with IRX14, required for xylan and pectin synthesis in seed coat epidermal (SCE) cells. Collaboratively with GAUT11, essential for the accumulation of seed mucilage, a gelatinous wall rich in unbranched rhamnogalacturonan I (RG I), and for shaping the surface morphology of seeds. This Arabidopsis thaliana (Mouse-ear cress) protein is Probable hexosyltransferase MUCI70.